Consider the following 274-residue polypeptide: Large ribosomal subunit protein uL2cz/uL2cy (274 aa).

Disordered stretches follow at residues 1 to 25 (MAIHLYKTSTPSTRNGAVDSQVKSN) and 223 to 274 (MNPV…RRTK).

The protein belongs to the universal ribosomal protein uL2 family. In terms of assembly, part of the 50S ribosomal subunit.

The protein localises to the plastid. It is found in the chloroplast. This Citrus sinensis (Sweet orange) protein is Large ribosomal subunit protein uL2cz/uL2cy (rpl2-A).